Reading from the N-terminus, the 1137-residue chain is Voltage-dependent calcium channel subunit alpha-2/delta-4 (1137 aa).

An N-terminal signal peptide occupies residues 1–19 (MVCGCSALLPLPNPRPTMP). The Extracellular portion of the chain corresponds to 20-1115 (ATPNFLANPS…AQDCGGASDT (1096 aa)). N-linked (GlcNAc...) asparagine glycosylation occurs at asparagine 201. A VWFA domain is found at 291–473 (DIVILVDVSG…ENVMEYLHVL (183 aa)). A divalent metal cation contacts are provided by aspartate 297, serine 299, and serine 301. Positions 297-301 (DVSGS) match the MIDAS-like motif motif. An intrachain disulfide couples cysteine 447 to cysteine 1097. Positions 487-580 (WTEAYMDSKL…RPLYREGKKL (94 aa)) constitute a Cache domain. N-linked (GlcNAc...) asparagine glycosylation is present at asparagine 664. Residues 1116–1136 (SASPPLLLLPVCAWGLLPQLL) form a helical membrane-spanning segment. A topological domain (cytoplasmic) is located at residue arginine 1137.

This sequence belongs to the calcium channel subunit alpha-2/delta family. In terms of assembly, dimer formed of alpha-2-2 and delta-2 chains; disulfide-linked. Voltage-dependent calcium channels are multisubunit complexes, consisting of alpha-1 (CACNA1), alpha-2 (CACNA2D), beta (CACNB) and delta (CACNA2D) subunits in a 1:1:1:1 ratio. Interacts with CACNA1C and CACNB3. In terms of processing, may be proteolytically processed into subunits alpha-2-4 and delta-4 that are disulfide-linked. It is however unclear whether such cleavage really takes place in vivo and has a functional role. As to expression, predominantly expressed in certain types of endocrine cells. Present in the Paneth cells of the small intestine. Also present in the erythroblasts in the fetal liver, in the cells of the zona reticularis of the adrenal gland and in the basophils of the pituitary. Present at low level in some brain regions such as the cerebellum (at protein level).

The protein localises to the membrane. In terms of biological role, the alpha-2/delta subunit of voltage-dependent calcium channels regulates calcium current density and activation/inactivation kinetics of the calcium channel. The protein is Voltage-dependent calcium channel subunit alpha-2/delta-4 (CACNA2D4) of Homo sapiens (Human).